We begin with the raw amino-acid sequence, 91 residues long: C-C motif chemokine 5 (91 aa).

Positions 1–23 are cleaved as a signal peptide; sequence MKVSAARLAVILVATALCAPASA. 2 disulfides stabilise this stretch: Cys33–Cys57 and Cys34–Cys73.

This sequence belongs to the intercrine beta (chemokine CC) family.

It is found in the secreted. Its function is as follows. Chemoattractant for blood monocytes, memory T-helper cells and eosinophils. Causes the release of histamine from basophils and activates eosinophils. May activate several chemokine receptors including CCR1, CCR3, CCR4 and CCR5. May also be an agonist of the G protein-coupled receptor GPR75. Together with GPR75, may play a role in neuron survival through activation of a downstream signaling pathway involving the PI3, Akt and MAP kinases. By activating GPR75 may also play a role in insulin secretion by islet cells. This chain is C-C motif chemokine 5 (CCL5), found in Macaca mulatta (Rhesus macaque).